A 403-amino-acid chain; its full sequence is Argininosuccinate synthase (403 aa).

9–17 (AYSGGLDTS) contributes to the ATP binding site. Y86 lines the L-citrulline pocket. G116 contributes to the ATP binding site. L-aspartate contacts are provided by T118, N122, and D123. N122 is a binding site for L-citrulline. L-citrulline-binding residues include R126, S174, E259, and Y271.

The protein belongs to the argininosuccinate synthase family. Type 1 subfamily. Homotetramer.

It localises to the cytoplasm. It carries out the reaction L-citrulline + L-aspartate + ATP = 2-(N(omega)-L-arginino)succinate + AMP + diphosphate + H(+). It functions in the pathway amino-acid biosynthesis; L-arginine biosynthesis; L-arginine from L-ornithine and carbamoyl phosphate: step 2/3. The sequence is that of Argininosuccinate synthase from Ligilactobacillus salivarius (strain UCC118) (Lactobacillus salivarius).